Consider the following 355-residue polypeptide: MGGNSIGNLFRVTTFGESHGKALGGIIDGVPPGMKLSEDDLQIDLNRRCPGKSLYITPRYEHDKVYILSGIFEGVTTGTSIGLLVQNKDQHSEDYQSIRDLYRPGHADYSYEKKYGMRDYRGGGRSSARETVIRVAAGAIAKKYLAYRCGIKIRGFIAQIGHIKCELKDWNQVEQNPFFCPDIDCLEALDILIRNLKKYGNSIGAKVTIIAENVPAGLGEPVFDRLDADLAHALMSINAVKGVEIGDGFAVISQLGNENRDEITSQGFLSNHAGGILGGISSGQPVIAHIALKPASSVKQPCNTVTRYGNEVEIITEGRHDICVGIRAVPIAEAMMAIVLMDHFLRNRAQCSDVK.

Position 48 (Arg48) interacts with NADP(+). FMN is bound by residues 125-127 (RSS), 238-239 (NA), Gly278, 293-297 (KPASS), and Arg319.

The protein belongs to the chorismate synthase family. Homotetramer. The cofactor is FMNH2.

The enzyme catalyses 5-O-(1-carboxyvinyl)-3-phosphoshikimate = chorismate + phosphate. It participates in metabolic intermediate biosynthesis; chorismate biosynthesis; chorismate from D-erythrose 4-phosphate and phosphoenolpyruvate: step 7/7. In terms of biological role, catalyzes the anti-1,4-elimination of the C-3 phosphate and the C-6 proR hydrogen from 5-enolpyruvylshikimate-3-phosphate (EPSP) to yield chorismate, which is the branch point compound that serves as the starting substrate for the three terminal pathways of aromatic amino acid biosynthesis. This reaction introduces a second double bond into the aromatic ring system. The sequence is that of Chorismate synthase from Baumannia cicadellinicola subsp. Homalodisca coagulata.